Here is a 464-residue protein sequence, read N- to C-terminus: Cell division protein FtsA (464 aa).

Positions 392–464 (EVIESDKDSE…FKKLMKSLFE (73 aa)) are disordered. A compositionally biased stretch (basic and acidic residues) spans 416-455 (KKENDEVAPEAPREESYEDRENHLEDEQQTEGKAKEESKF).

Belongs to the FtsA/MreB family. As to quaternary structure, self-interacts. Interacts with FtsZ.

Its subcellular location is the cell membrane. Its function is as follows. Cell division protein that is involved in the assembly of the Z ring. May serve as a membrane anchor for the Z ring. This Staphylococcus epidermidis (strain ATCC 35984 / DSM 28319 / BCRC 17069 / CCUG 31568 / BM 3577 / RP62A) protein is Cell division protein FtsA.